The following is a 152-amino-acid chain: Small ribosomal subunit protein uS15 (152 aa).

Basic residues predominate over residues 1 to 11 (MAKMHTKRKGK). A disordered region spans residues 1–24 (MAKMHTKRKGKSSSTRPNRTEPPE).

This sequence belongs to the universal ribosomal protein uS15 family. In terms of assembly, part of the 30S ribosomal subunit.

This is Small ribosomal subunit protein uS15 from Methanosarcina mazei (strain ATCC BAA-159 / DSM 3647 / Goe1 / Go1 / JCM 11833 / OCM 88) (Methanosarcina frisia).